The following is a 208-amino-acid chain: Holliday junction resolvase RecU (208 aa).

Mg(2+) contacts are provided by T87, D89, E102, and Q121.

The protein belongs to the RecU family. Mg(2+) serves as cofactor.

The protein localises to the cytoplasm. The enzyme catalyses Endonucleolytic cleavage at a junction such as a reciprocal single-stranded crossover between two homologous DNA duplexes (Holliday junction).. Functionally, endonuclease that resolves Holliday junction intermediates in genetic recombination. Cleaves mobile four-strand junctions by introducing symmetrical nicks in paired strands. Promotes annealing of linear ssDNA with homologous dsDNA. Required for DNA repair, homologous recombination and chromosome segregation. The polypeptide is Holliday junction resolvase RecU (Staphylococcus aureus (strain Mu3 / ATCC 700698)).